Here is a 76-residue protein sequence, read N- to C-terminus: Omega-agatoxin-Aa3a (76 aa).

Cystine bridges form between Cys2/Cys19, Cys9/Cys25, Cys16/Cys52, Cys18/Cys40, Cys27/Cys38, and Cys59/Cys67.

It belongs to the neurotoxin 04 (omega-agtx) family. 03 (type II/III omega-agtx) subfamily. Expressed by the venom gland.

The protein resides in the secreted. Omega-agatoxin are antagonist of voltage-gated calcium channels. They block insect neuromuscular transmission presynaptically. Potent blocker of N- (Cav2.2/CACNA1B) and L-type (Cav1/CACNA1) calcium channels. The chain is Omega-agatoxin-Aa3a from Agelenopsis aperta (North American funnel-web spider).